Consider the following 294-residue polypeptide: Urease accessory protein UreD 1 (294 aa).

A disordered region spans residues 1-22; that stretch reads MALSLDGLPEKPAPAEAPSPPV. Positions 11–21 are enriched in pro residues; that stretch reads KPAPAEAPSPP.

Belongs to the UreD family. In terms of assembly, ureD, UreF and UreG form a complex that acts as a GTP-hydrolysis-dependent molecular chaperone, activating the urease apoprotein by helping to assemble the nickel containing metallocenter of UreC. The UreE protein probably delivers the nickel.

The protein localises to the cytoplasm. Required for maturation of urease via the functional incorporation of the urease nickel metallocenter. This is Urease accessory protein UreD 1 from Methylorubrum extorquens (strain PA1) (Methylobacterium extorquens).